The sequence spans 296 residues: Phosphatidylglycerol--prolipoprotein diacylglyceryl transferase (296 aa).

The next 7 membrane-spanning stretches (helical) occupy residues 17–37 (LAVR…IVVG), 59–79 (MMFY…VLFY), 97–117 (GGMS…LFAW), 129–149 (FVAP…FING), 203–223 (PSQL…LFFF), 230–250 (LGAV…TVEF), and 265–285 (LSMG…LLVW). R142 is an a 1,2-diacyl-sn-glycero-3-phospho-(1'-sn-glycerol) binding site.

This sequence belongs to the Lgt family.

It localises to the cell inner membrane. It carries out the reaction L-cysteinyl-[prolipoprotein] + a 1,2-diacyl-sn-glycero-3-phospho-(1'-sn-glycerol) = an S-1,2-diacyl-sn-glyceryl-L-cysteinyl-[prolipoprotein] + sn-glycerol 1-phosphate + H(+). Its pathway is protein modification; lipoprotein biosynthesis (diacylglyceryl transfer). Functionally, catalyzes the transfer of the diacylglyceryl group from phosphatidylglycerol to the sulfhydryl group of the N-terminal cysteine of a prolipoprotein, the first step in the formation of mature lipoproteins. This Burkholderia ambifaria (strain MC40-6) protein is Phosphatidylglycerol--prolipoprotein diacylglyceryl transferase.